Reading from the N-terminus, the 90-residue chain is YcgL domain-containing protein YE2368 (90 aa).

Residues 1 to 85 (MLCAIYRSPK…PPESLLKMHL (85 aa)) form the YcgL domain.

This Yersinia enterocolitica serotype O:8 / biotype 1B (strain NCTC 13174 / 8081) protein is YcgL domain-containing protein YE2368.